Consider the following 185-residue polypeptide: Signal peptidase I (185 aa).

At 1 to 20 (MKSEKEKTSKKSAVLDWAKA) the chain is on the cytoplasmic side. A helical membrane pass occupies residues 21 to 41 (IIIAVVLAVLIRNFLFAPYVV). Residues 42–185 (DGESMEPTLH…FPFNEIRKTK (144 aa)) are Extracellular-facing. Residues Ser-45 and Lys-85 contribute to the active site.

The protein belongs to the peptidase S26 family.

It is found in the cell membrane. The catalysed reaction is Cleavage of hydrophobic, N-terminal signal or leader sequences from secreted and periplasmic proteins.. The chain is Signal peptidase I (sipA) from Bacillus amyloliquefaciens (Bacillus velezensis).